Here is a 186-residue protein sequence, read N- to C-terminus: NADH-quinone oxidoreductase subunit B (186 aa).

Cys-44, Cys-45, Cys-110, and Cys-139 together coordinate [4Fe-4S] cluster.

It belongs to the complex I 20 kDa subunit family. NDH-1 is composed of 14 different subunits. Subunits NuoB, C, D, E, F, and G constitute the peripheral sector of the complex. [4Fe-4S] cluster is required as a cofactor.

Its subcellular location is the cell inner membrane. It carries out the reaction a quinone + NADH + 5 H(+)(in) = a quinol + NAD(+) + 4 H(+)(out). Its function is as follows. NDH-1 shuttles electrons from NADH, via FMN and iron-sulfur (Fe-S) centers, to quinones in the respiratory chain. The immediate electron acceptor for the enzyme in this species is believed to be ubiquinone. Couples the redox reaction to proton translocation (for every two electrons transferred, four hydrogen ions are translocated across the cytoplasmic membrane), and thus conserves the redox energy in a proton gradient. The protein is NADH-quinone oxidoreductase subunit B of Leptospira biflexa serovar Patoc (strain Patoc 1 / Ames).